Consider the following 382-residue polypeptide: Histidinol-phosphate aminotransferase (382 aa).

Lys215 carries the N6-(pyridoxal phosphate)lysine modification. A disordered region spans residues 363–382 (NIDNQSKTHSQTSSIRKGTI).

Belongs to the class-II pyridoxal-phosphate-dependent aminotransferase family. Histidinol-phosphate aminotransferase subfamily. Homodimer. Pyridoxal 5'-phosphate is required as a cofactor.

It carries out the reaction L-histidinol phosphate + 2-oxoglutarate = 3-(imidazol-4-yl)-2-oxopropyl phosphate + L-glutamate. It participates in amino-acid biosynthesis; L-histidine biosynthesis; L-histidine from 5-phospho-alpha-D-ribose 1-diphosphate: step 7/9. The protein is Histidinol-phosphate aminotransferase of Yersinia pseudotuberculosis serotype O:3 (strain YPIII).